A 575-amino-acid polypeptide reads, in one-letter code: Hemagglutinin-neuraminidase (575 aa).

Topologically, residues 1 to 34 (MAEKGKTNSSYWSTTRNDNSTVNTYIDTPAGKTH) are intravirion. Residues 35 to 55 (IWLLIATTMHTILSFIIMILC) form a helical membrane-spanning segment. The Virion surface segment spans residues 56 to 575 (IDLIIKQDTC…SIPKICKITS (520 aa)). N-linked (GlcNAc...) asparagine; by host glycosylation is present at asparagine 77. 4 disulfides stabilise this stretch: cysteine 192–cysteine 216, cysteine 258–cysteine 271, cysteine 357–cysteine 469, and cysteine 463–cysteine 473. The involved in neuraminidase activity stretch occupies residues 254 to 259 (NRKSCS). Asparagine 499 and asparagine 511 each carry an N-linked (GlcNAc...) asparagine; by host glycan. Cysteine 535 and cysteine 544 are disulfide-bonded.

The protein belongs to the paramyxoviruses hemagglutinin-neuraminidase family. Homotetramer; composed of disulfide-linked homodimers. Interacts with F protein trimer.

The protein localises to the virion membrane. It is found in the host cell membrane. It carries out the reaction Hydrolysis of alpha-(2-&gt;3)-, alpha-(2-&gt;6)-, alpha-(2-&gt;8)- glycosidic linkages of terminal sialic acid residues in oligosaccharides, glycoproteins, glycolipids, colominic acid and synthetic substrates.. Functionally, attaches the virus to sialic acid-containing cell receptors and thereby initiating infection. Binding of HN protein to the receptor induces a conformational change that allows the F protein to trigger virion/cell membranes fusion. Its function is as follows. Neuraminidase activity ensures the efficient spread of the virus by dissociating the mature virions from the neuraminic acid containing glycoproteins. The chain is Hemagglutinin-neuraminidase (HN) from Human parainfluenza 1 virus (strain Washington/1957) (HPIV-1).